The primary structure comprises 224 residues: Urease accessory protein UreF (224 aa).

It belongs to the UreF family. As to quaternary structure, ureD, UreF and UreG form a complex that acts as a GTP-hydrolysis-dependent molecular chaperone, activating the urease apoprotein by helping to assemble the nickel containing metallocenter of UreC. The UreE protein probably delivers the nickel.

It localises to the cytoplasm. In terms of biological role, required for maturation of urease via the functional incorporation of the urease nickel metallocenter. This Nitrosococcus oceani (strain ATCC 19707 / BCRC 17464 / JCM 30415 / NCIMB 11848 / C-107) protein is Urease accessory protein UreF.